Here is a 363-residue protein sequence, read N- to C-terminus: Uroporphyrinogen decarboxylase (363 aa).

Substrate contacts are provided by residues 27-31 (RQAGR), D77, Y157, T212, and H333.

The protein belongs to the uroporphyrinogen decarboxylase family. In terms of assembly, homodimer.

It is found in the cytoplasm. The catalysed reaction is uroporphyrinogen III + 4 H(+) = coproporphyrinogen III + 4 CO2. Its pathway is porphyrin-containing compound metabolism; protoporphyrin-IX biosynthesis; coproporphyrinogen-III from 5-aminolevulinate: step 4/4. Catalyzes the decarboxylation of four acetate groups of uroporphyrinogen-III to yield coproporphyrinogen-III. The polypeptide is Uroporphyrinogen decarboxylase (Cupriavidus necator (strain ATCC 17699 / DSM 428 / KCTC 22496 / NCIMB 10442 / H16 / Stanier 337) (Ralstonia eutropha)).